The chain runs to 1550 residues: MPEVRSSTQSESGMSQWMGKILSIRGAGLTIGVFGLCALIAATSVTLPPEQQLIVAFVCVVIFFIVGHKPSRRSQIFLEVLSGLVSLRYLTWRLTETLSFDTWLQGLLGTMLLVAELYALMMLFLSYFQTIAPLHRAPLPLPPNPDEWPTVDIFVPTYNEELSIVRLTVLGSLGIDWPPEKVRVHILDDGRRPEFAAFAAECGANYIARPTNEHAKAGNLNYAIGHTDGDYILIFDCDHVPTRAFLQLTMGWMVEDPKIALMQTPHHFYSPDPFQRNLSAGYRTPPEGNLFYGVVQDGNDFWDATFFCGSCAILRRTAIEQIGGFATQTVTEDAHTALKMQRLGWSTAYLRIPLAGGLATERLILHIGQRVRWARGMLQIFRIDNPLFGRGLSWGQRLCYLSAMTSFLFAVPRVIFLSSPLAFLFFGQNIIAASPLALLAYAIPHMFHAVGTASKINKGWRYSFWSEVYETTMALFLVRVTIVTLLSPSRGKFNVTDKGGLLEKGYFDLGAVYPNIILGLIMFGGLARGVYELSFGHLDQIAERAYLLNSAWAMLSLIIILAAIAVGRETQQKRNSHRIPATIPVEVANADGSIIVTGVTEDLSMGGAAVKMSWPAKLSGPTPVYIRTVLDGEELILPARIIRAGNGRGIFIWTIDNLQQEFSVIRLVFGRADAWVDWGNYKADRPLLSLMDMVLSVKGLFRSSGDIVHRSSPTKPLAGNALSDDTNNPSRKERVLKGTVKMVSLLALLTFASSAQAASAPRAVAAKAPAHQPEASDLPPLPALLPATSGAAQAGAGDAGANGPGSPTGQPLAADSADALVENAENTSDTATVHNYTLKDLGAAGSITMRGLAPLQGIEFGIPSDQLVTSARLVLSGSMSPNLRPETNSVTMTLNEQYIGTLRPDPAHPTFGPMSFEINPIFFVSGNRLNFNFASGSKGCSDITNDTLWATISQNSQLQITTIALPPRRLLSRLPQPFYDKNVRQHVTVPMVLAQTYDPQILKSAGILASWFGKQTDFLGVTFPVSSTIPQSGNAILIGVADELPTSLGRPQVNGPAVLELPNPSDANATILVVTGRDRDEVITASKGIAFASAPLPTDSHMDVAPVDIAPRKPNDAPSFIAMDHPVRFGDLVTASKLQGTGFTSGVLSVPFRIPPDLYTWRNRPYKMQVRFRSPAGEAKDVEKSRLDVGINEVYLHSYPLRETHGLVGAVLQGVGLARPASGMQVHDLDVPPWTVFGQDQLNFYFDAMPLARGICQSGAANNAFHLGLDPDSTIDFSRAHHIAQMPNLAYMATVGFPFTTYADLSQTAVVLPEHPNAATVGAYLDLMGFMGAATWYPVAGVDIVSADHVSDVADRNLLVISTLATSGEIAPLLSRSSYEVADGHLRTVSHASALDNAIKAVDDPLTAFRDRDSKPQDVDTPLTGGVGAMIEAESPLTAGRTVLALLSSDGAGLNNLLQMLGERKKQANIQGDLVVAHGEDLSSYRTSPVYTIGTLPLWLWPDWYMHNRPVRVLLVGLLGCILIVSVLARALARHATRRFKQLEDERRKS.

Positions Met1–Lys741 are catalytic. The next 3 membrane-spanning stretches (helical) occupy residues Gly26–Thr46, Leu47–Gly67, and Gly106–Ser126. The segment at Glu147–Val240 is catalytic subdomain A. Asp189 is an active-site residue. The substrate site is built by Asp236 and Asp238. The tract at residues Thr317–Met377 is catalytic subdomain B. The active site involves Asp333. Helical transmembrane passes span Leu398–Ser418, Phe423–Ile443, Val468–Pro488, Phe507–Ala527, and Leu547–Gly567. Residues Gln572 to Gly647 enclose the PilZ domain. Disordered regions lie at residues Ser711–Arg734 and Ala768–Ala813. The interval Met742–Ser1550 is cyclic di-GMP binding domain. Low complexity predominate over residues Ala768–Ala796. A helical membrane pass occupies residues Val1513–Ala1533.

It in the N-terminal section; belongs to the glycosyltransferase 2 family. This sequence in the C-terminal section; belongs to the AcsB/BcsB family. Mg(2+) is required as a cofactor.

The protein resides in the cell inner membrane. The enzyme catalyses [(1-&gt;4)-beta-D-glucosyl](n) + UDP-alpha-D-glucose = [(1-&gt;4)-beta-D-glucosyl](n+1) + UDP + H(+). It functions in the pathway glycan metabolism; bacterial cellulose biosynthesis. Activated by c-di-GMP. In terms of biological role, bifunctional protein comprised of a catalytic subunit and a regulatory subunit. The catalytic subunit of cellulose synthase polymerizes uridine 5'-diphosphate glucose to cellulose in a processive way. The thick cellulosic mats generated by this enzyme probably provide a specialized protective environment to the bacterium. The regulatory subunit binds bis-(3'-5') cyclic diguanylic acid (c-di-GMP). The protein is Cellulose synthase 1 (acsAB) of Komagataeibacter xylinus (Gluconacetobacter xylinus).